We begin with the raw amino-acid sequence, 660 residues long: T-box protein H15 (660 aa).

Over residues 1–11 the composition is skewed to polar residues; it reads MLLSNQPANTK. Disordered stretches follow at residues 1-72, 90-122, and 169-266; these read MLLS…NHNQ, GGNA…DDVD, and QQQQ…PKIV. The span at 12–22 shows a compositional bias: low complexity; it reads PQQTPSPSQTQ. The segment covering 23–33 has biased composition (polar residues); sequence NFKSKLQQQIV. The segment covering 35 to 47 has biased composition (low complexity); it reads AAAAAAANIANGS. Basic residues predominate over residues 48–71; that stretch reads SHHHHHQNHHHHHPLNNHHNHNHN. Low complexity-rich tracts occupy residues 93–108 and 169–179; these read APSS…SPAS and QQQQQQQQQRQ. The span at 180–198 shows a compositional bias: basic residues; that stretch reads QTHHHATTGKQQRQHHNHH. A compositionally biased stretch (low complexity) spans 199 to 233; it reads SSNTNNSSNSGNSNTNSKSSSQRGRSAAAVGAAAT. Residues 234–243 are compositionally biased toward pro residues; that stretch reads PSPPPPPPSQ. The T-box DNA-binding region spans 286–472; that stretch reads LWDKFHELGT…SNPFAKGFRD (187 aa). The tract at residues 598 to 660 is disordered; the sequence is NRTPPPSMAV…PPASNRAESP (63 aa). A compositionally biased stretch (pro residues) spans 600 to 613; that stretch reads TPPPSMAVAPPAPA. A compositionally biased stretch (low complexity) spans 614–624; the sequence is TPTSSCGSASP. Polar residues predominate over residues 643 to 660; that stretch reads QVPQHQASPPASNRAESP.

It is found in the nucleus. The sequence is that of T-box protein H15 (H15) from Drosophila melanogaster (Fruit fly).